The sequence spans 454 residues: tRNA modification GTPase MnmE (454 aa).

Positions 23, 80, and 120 each coordinate (6S)-5-formyl-5,6,7,8-tetrahydrofolate. In terms of domain architecture, TrmE-type G spans 216 to 377 (GMKVVIAGRP…LRNHLKQSMG (162 aa)). Asn226 contacts K(+). GTP-binding positions include 226–231 (NAGKSS), 245–251 (TDIAGTT), 270–273 (DTAG), 335–338 (NKAD), and 358–360 (SAR). Ser230 contacts Mg(2+). K(+)-binding residues include Thr245, Ile247, and Thr250. A Mg(2+)-binding site is contributed by Thr251. Lys454 is a binding site for (6S)-5-formyl-5,6,7,8-tetrahydrofolate.

It belongs to the TRAFAC class TrmE-Era-EngA-EngB-Septin-like GTPase superfamily. TrmE GTPase family. Homodimer. Heterotetramer of two MnmE and two MnmG subunits. It depends on K(+) as a cofactor.

It is found in the cytoplasm. In terms of biological role, exhibits a very high intrinsic GTPase hydrolysis rate. Involved in the addition of a carboxymethylaminomethyl (cmnm) group at the wobble position (U34) of certain tRNAs, forming tRNA-cmnm(5)s(2)U34. The protein is tRNA modification GTPase MnmE of Salmonella choleraesuis (strain SC-B67).